The primary structure comprises 269 residues: tRNA pseudouridine synthase A (269 aa).

Aspartate 51 functions as the Nucleophile in the catalytic mechanism. Tyrosine 109 contacts substrate.

This sequence belongs to the tRNA pseudouridine synthase TruA family. Homodimer.

It catalyses the reaction uridine(38/39/40) in tRNA = pseudouridine(38/39/40) in tRNA. Functionally, formation of pseudouridine at positions 38, 39 and 40 in the anticodon stem and loop of transfer RNAs. The sequence is that of tRNA pseudouridine synthase A from Haemophilus influenzae (strain PittGG).